The sequence spans 414 residues: Tyrosine--tRNA ligase (414 aa).

Tyrosine 38 is an L-tyrosine binding site. Residues 43–52 (PTATSLHLGN) carry the 'HIGH' region motif. Residues tyrosine 165 and glutamine 169 each coordinate L-tyrosine. The 'KMSKS' region motif lies at 228-232 (KFGKS). Lysine 231 serves as a coordination point for ATP. An S4 RNA-binding domain is found at 349–414 (FNANQIIDLG…KKYFFMIELI (66 aa)).

It belongs to the class-I aminoacyl-tRNA synthetase family. TyrS type 1 subfamily. As to quaternary structure, homodimer.

The protein resides in the cytoplasm. It catalyses the reaction tRNA(Tyr) + L-tyrosine + ATP = L-tyrosyl-tRNA(Tyr) + AMP + diphosphate + H(+). In terms of biological role, catalyzes the attachment of tyrosine to tRNA(Tyr) in a two-step reaction: tyrosine is first activated by ATP to form Tyr-AMP and then transferred to the acceptor end of tRNA(Tyr). In Mesomycoplasma hyopneumoniae (strain 7448) (Mycoplasma hyopneumoniae), this protein is Tyrosine--tRNA ligase.